The sequence spans 116 residues: Protein Rev (116 aa).

2 positions are modified to phosphoserine; by host CK2: Ser-5 and Ser-8. Residues 18–26 (LIKFLYQSN) form a homomultimerization region. The disordered stretch occupies residues 23 to 49 (YQSNPPPNPEGTRQARRNRRRRWRERQ). The Nuclear localization signal and RNA-binding (RRE) signature appears at 34 to 50 (TRQARRNRRRRWRERQR). The segment covering 36–47 (QARRNRRRRWRE) has biased composition (basic residues). The Nuclear export signal and binding to XPO1 signature appears at 73-84 (LQLPPLERLTLD). Residues Ser-92 and Ser-99 each carry the phosphoserine; by host modification.

The protein belongs to the HIV-1 REV protein family. Homomultimer; when bound to the RRE. Multimeric assembly is essential for activity and may involve XPO1. Binds to human KPNB1, XPO1, TNPO1, RANBP5 and IPO7. Interacts with the viral Integrase. Interacts with human KHDRBS1. Interacts with human NAP1; this interaction decreases Rev multimerization and stimulates its activity. Interacts with human DEAD-box helicases DDX3 and DDX24; these interactions may serve for viral RNA export to the cytoplasm and packaging, respectively. Interacts with human PSIP1; this interaction may inhibit HIV-1 DNA integration by promoting dissociation of the Integrase-LEDGF/p75 complex. In terms of processing, asymmetrically arginine dimethylated at one site by host PRMT6. Methylation impairs the RNA-binding activity and export of viral RNA from the nucleus to the cytoplasm. Post-translationally, phosphorylated by protein kinase CK2. Presence of, and maybe binding to the N-terminus of the regulatory beta subunit of CK2 is necessary for CK2-mediated Rev's phosphorylation.

The protein localises to the host nucleus. It localises to the host nucleolus. It is found in the host cytoplasm. In terms of biological role, escorts unspliced or incompletely spliced viral pre-mRNAs (late transcripts) out of the nucleus of infected cells. These pre-mRNAs carry a recognition sequence called Rev responsive element (RRE) located in the env gene, that is not present in fully spliced viral mRNAs (early transcripts). This function is essential since most viral proteins are translated from unspliced or partially spliced pre-mRNAs which cannot exit the nucleus by the pathway used by fully processed cellular mRNAs. Rev itself is translated from a fully spliced mRNA that readily exits the nucleus. Rev's nuclear localization signal (NLS) binds directly to KPNB1/Importin beta-1 without previous binding to KPNA1/Importin alpha-1. KPNB1 binds to the GDP bound form of RAN (Ran-GDP) and targets Rev to the nucleus. In the nucleus, the conversion from Ran-GDP to Ran-GTP dissociates Rev from KPNB1 and allows Rev's binding to the RRE in viral pre-mRNAs. Rev multimerization on the RRE via cooperative assembly exposes its nuclear export signal (NES) to the surface. Rev can then form a complex with XPO1/CRM1 and Ran-GTP, leading to nuclear export of the complex. Conversion from Ran-GTP to Ran-GDP mediates dissociation of the Rev/RRE/XPO1/RAN complex, so that Rev can return to the nucleus for a subsequent round of export. Beside KPNB1, also seems to interact with TNPO1/Transportin-1, RANBP5/IPO5 and IPO7/RANBP7 for nuclear import. The nucleoporin-like HRB/RIP is an essential cofactor that probably indirectly interacts with Rev to release HIV RNAs from the perinuclear region to the cytoplasm. The sequence is that of Protein Rev from Human immunodeficiency virus type 1 group M subtype B (isolate HXB3) (HIV-1).